Consider the following 117-residue polypeptide: B-enzyme (117 aa).

The active site involves Asp-89.

The catalysed reaction is Hydrolysis of (1-&gt;4)-beta-linkages between N-acetylmuramic acid and N-acetyl-D-glucosamine residues in a peptidoglycan and between N-acetyl-D-glucosamine residues in chitodextrins.. The chain is B-enzyme (lyzB) from Bacillus subtilis.